Reading from the N-terminus, the 79-residue chain is MAQQRRGGFKRRKKVDFIAANKIEYVDYKDTELLSRFVSERGKILPRRVTGTSAKNQRKVTTAIKRARVMALMPYVNED.

It belongs to the bacterial ribosomal protein bS18 family. In terms of assembly, part of the 30S ribosomal subunit. Forms a tight heterodimer with protein bS6.

In terms of biological role, binds as a heterodimer with protein bS6 to the central domain of the 16S rRNA, where it helps stabilize the platform of the 30S subunit. The protein is Small ribosomal subunit protein bS18 of Streptococcus pyogenes serotype M5 (strain Manfredo).